The chain runs to 293 residues: MNEQELKQMIEGILTEMSGGKTTDTVAAAPTKSVVETVVTEGSIPDITEVDIKKQLLVPEPADREGYLKMKQMTPARLGLWRAGPRYKTETILRFRADHAVAQDSVFSYVSEDLVKEMNFIPVNTKCHDKDEYLTRPDLGREFDDEMVEVIRANTTKNAKLQIVVGDGLSSAAIEANIKDILPSIKQGLKMYNLDFDNIIFVKHCRVPSMDQIGEITGADVVCLLVGERPGLVTAESMSAYIAYKPTVGMPEARRTVISNIHSGGTPPVEAGAYIAELIHNMLEKKCSGIDLK.

Adenosylcob(III)alamin-binding residues include V207 and E228.

The protein belongs to the EutC family. The basic unit is a heterodimer which dimerizes to form tetramers. The heterotetramers trimerize; 6 large subunits form a core ring with 6 small subunits projecting outwards. The cofactor is adenosylcob(III)alamin.

It is found in the bacterial microcompartment. The enzyme catalyses ethanolamine = acetaldehyde + NH4(+). It participates in amine and polyamine degradation; ethanolamine degradation. Functionally, catalyzes the deamination of various vicinal amino-alcohols to oxo compounds. Allows this organism to utilize ethanolamine as the sole source of nitrogen and carbon in the presence of external vitamin B12. This Listeria innocua serovar 6a (strain ATCC BAA-680 / CLIP 11262) protein is Ethanolamine ammonia-lyase small subunit.